Reading from the N-terminus, the 61-residue chain is Metallothionein-2E (61 aa).

Met-1 carries the post-translational modification N-acetylmethionine. Positions 1–29 are beta; sequence MDPNCSCATRDSCACASSCKCKECKCTSC. Residues Cys-5, Cys-7, Cys-13, Cys-15, Cys-19, Cys-21, Cys-24, Cys-26, Cys-29, Cys-33, Cys-34, Cys-36, Cys-37, Cys-41, Cys-44, Cys-48, Cys-50, Cys-57, Cys-59, and Cys-60 each contribute to the a divalent metal cation site. The alpha stretch occupies residues 30 to 61; that stretch reads KKSCCSCCPAGCTKCAQGCICKGALDKCSCCA.

This sequence belongs to the metallothionein superfamily. Type 1 family. As to quaternary structure, monomer.

Functionally, metallothioneins have a high content of cysteine residues that bind various heavy metals; these proteins are transcriptionally regulated by both heavy metals and glucocorticoids. The polypeptide is Metallothionein-2E (Oryctolagus cuniculus (Rabbit)).